A 502-amino-acid chain; its full sequence is Arabinose import ATP-binding protein AraG (502 aa).

ABC transporter domains lie at L5–R240 and L253–K496. Residue G37 to S44 coordinates ATP.

The protein belongs to the ABC transporter superfamily. Arabinose importer (TC 3.A.1.2.2) family. In terms of assembly, the complex is composed of two ATP-binding proteins (AraG), two transmembrane proteins (AraH) and a solute-binding protein (AraF).

It is found in the cell inner membrane. It carries out the reaction L-arabinose(out) + ATP + H2O = L-arabinose(in) + ADP + phosphate + H(+). In terms of biological role, part of the ABC transporter complex AraFGH involved in arabinose import. Responsible for energy coupling to the transport system. This is Arabinose import ATP-binding protein AraG from Rhizobium johnstonii (strain DSM 114642 / LMG 32736 / 3841) (Rhizobium leguminosarum bv. viciae).